The primary structure comprises 508 residues: Photosystem II CP47 reaction center protein (508 aa).

The next 6 membrane-spanning stretches (helical) occupy residues 21–36, 101–115, 140–156, 203–218, 237–252, and 457–472; these read AVHL…WAGS, ITLS…IWHW, GIHL…FGAF, IAAG…FHLS, VLSS…AFVV, and TFAL…HGAR.

It belongs to the PsbB/PsbC family. PsbB subfamily. In terms of assembly, PSII is composed of 1 copy each of membrane proteins PsbA, PsbB, PsbC, PsbD, PsbE, PsbF, PsbH, PsbI, PsbJ, PsbK, PsbL, PsbM, PsbT, PsbX, PsbY, PsbZ, Psb30/Ycf12, at least 3 peripheral proteins of the oxygen-evolving complex and a large number of cofactors. It forms dimeric complexes. Binds multiple chlorophylls. PSII binds additional chlorophylls, carotenoids and specific lipids. is required as a cofactor.

It localises to the plastid. Its subcellular location is the chloroplast thylakoid membrane. Its function is as follows. One of the components of the core complex of photosystem II (PSII). It binds chlorophyll and helps catalyze the primary light-induced photochemical processes of PSII. PSII is a light-driven water:plastoquinone oxidoreductase, using light energy to abstract electrons from H(2)O, generating O(2) and a proton gradient subsequently used for ATP formation. The sequence is that of Photosystem II CP47 reaction center protein from Psilotum nudum (Whisk fern).